The chain runs to 352 residues: MSTEDIYFNPIWDVRMTDTSLRDGSHHKRHQFTKDEVGSIVAALDAAGVPVIEVTHGDGLGGSSFNYGFSKTPEQELIKLAAETAKESKIAFLMLPGVGTKEDIKEAQNNGGSICRIATHCTEADVSIQHFGLARELGLETVGFLMMSHTISPEKLAKQARIMADAGCQCVYVVDSAGALVLEGVADRVSALVAELGDDAQVGFHGHENLGLGVANSIEAVRAGAKQIDGSCRRFGAGAGNAPVEALIGVFDKIGVKTGIDFFDIADAAEEVVAPAMPAECLLDRNALIMGYSGVYSSFLKHAIRQSERYGVPAHQLLHRAGQRKLIGGQEDQLIDIALEIKREQEAEATRA.

The Pyruvate carboxyltransferase domain occupies Val14–Ala266. Residue Arg22–Asp23 coordinates substrate. Asp23 is a binding site for Mn(2+). The active-site Proton acceptor is His26. 2 residues coordinate substrate: Ser176 and His205. The Mn(2+) site is built by His205 and His207. A substrate-binding site is contributed by Tyr296.

The protein belongs to the 4-hydroxy-2-oxovalerate aldolase family.

It carries out the reaction (S)-4-hydroxy-2-oxopentanoate = acetaldehyde + pyruvate. This Mycolicibacterium gilvum (strain PYR-GCK) (Mycobacterium gilvum (strain PYR-GCK)) protein is 4-hydroxy-2-oxovalerate aldolase.